The following is a 295-amino-acid chain: Nuclear transcription factor Y subunit A-2 (295 aa).

Residues 139-165 (YVNSKQYHGIIRRRQSRAKAAAVLDQK) carry the Subunit association domain (SAD) motif. A DNA-binding region (NFYA/HAP2-type) is located at residues 173 to 198 (KPYMHHSRHLHALRRPRGSGGRFLNT). Over residues 178–189 (HSRHLHALRRPR) the composition is skewed to basic residues. Residues 178–244 (HSRHLHALRR…VVHPENGTMN (67 aa)) are disordered. Positions 197 to 209 (NTKSQNLENSGTN) are enriched in polar residues. The segment covering 216–233 (SMQIQSQPKPQQSNSQNS) has biased composition (low complexity).

This sequence belongs to the NFYA/HAP2 subunit family. Heterotrimeric transcription factor composed of three components, NF-YA, NF-YB and NF-YC. NF-YB and NF-YC must interact and dimerize for NF-YA association and DNA binding. Component of a heat stress-inducible transcriptional complex with NF-YA and NF-YB subunits made, at least, of NFYA2, NFYB3 and DPB3-1 in cooperation with DREB2A. In terms of tissue distribution, ubiquitous. Expressed in seedlings, roots, petioles, hypocotyls, reproductive organ tissues and leaves.

It localises to the nucleus. Its function is as follows. Stimulates the transcription of various genes by recognizing and binding to a CCAAT motif in promoters. Promotes the expression of heat stress-inducible genes by contributing to the formation of a heat stress-specific transcriptional complex with NF-Y subunits (e.g. DPB3-1, NF-YA2 and NF-YB3) and DREB2A at the promoter of target genes, thus promoting heat tolerance. This Arabidopsis thaliana (Mouse-ear cress) protein is Nuclear transcription factor Y subunit A-2.